The sequence spans 373 residues: MAAVTLHLRAETKPLEARAALTPTTVKKLIAKGFKIYVEDSPQSTFNINEYRQAGAIIVPAGSWKTAPRDRIIIGLKEMPETDTFPLVHEHIQFAHCYKDQAGWQNVLMRFIKGHGTLYDLEFLENDQGRRVAAFGFYAGFAGAALGVRDWAFKQTHSDDEDLPAVSPYPNEKALVKDVTKDYKEALATGARKPTVLIIGALGRCGSGAIDLLHKVGIPDANILKWDIKETSRGGPFDEIPQADIFINCIYLSKPIAPFTNMEKLNNPNRRLRTVVDVSADTTNPHNPIPIYTVATVFNKPTVLVPTTAGPKLSVISIDHLPSLLPREASEFFSHDLLPSLELLPQRKTAPVWVRAKKLFDRHCARVKRSSRL.

At Ala2 the chain carries N-acetylalanine; partial. Arg18 and Lys77 together coordinate L-saccharopine. Lys77 (proton acceptor) is an active-site residue. The active-site Proton donor is the His96. Gln101 contacts L-saccharopine. Position 130 (Arg130) interacts with NAD(+). L-saccharopine contacts are provided by Arg131 and Phe135. Residues 203 to 204 (GR), Asp227, Thr231, Tyr251, and Val278 each bind NAD(+). A disulfide bridge links Cys205 with Cys249. 279 to 281 (SAD) contacts L-saccharopine. 318 to 321 (IDHL) provides a ligand contact to NAD(+). Residues 371–373 (SRL) carry the Microbody targeting signal motif.

Belongs to the AlaDH/PNT family. As to quaternary structure, monomer.

The protein resides in the peroxisome. It carries out the reaction L-saccharopine + NAD(+) + H2O = L-lysine + 2-oxoglutarate + NADH + H(+). Its pathway is amino-acid biosynthesis; L-lysine biosynthesis via AAA pathway; L-lysine from L-alpha-aminoadipate (fungal route): step 3/3. Its activity is regulated as follows. Inhibited by p-chloromercuribenzoate and iodoacetate by modification of the active site cysteine residue. Inhibited by diethyl pyrocarbonate by modification of histidine residues. Inhibited by pyridoxal 5'-phosphate by modification of an essential lysine residue. In terms of biological role, catalyzes the NAD(+)-dependent cleavage of saccharopine to L-lysine and 2-oxoglutarate, the final step in the alpha-aminoadipate (AAA) pathway for lysine biosynthesis. This Saccharomyces cerevisiae (strain ATCC 204508 / S288c) (Baker's yeast) protein is Saccharopine dehydrogenase [NAD(+), L-lysine-forming].